The sequence spans 907 residues: Leucine--tRNA ligase (907 aa).

The 'HIGH' region motif lies at 42–52 (PYPSGKLHMGH). The 'KMSKS' region signature appears at 651-655 (TMSKS). Lys-654 lines the ATP pocket.

It belongs to the class-I aminoacyl-tRNA synthetase family.

It localises to the cytoplasm. The catalysed reaction is tRNA(Leu) + L-leucine + ATP = L-leucyl-tRNA(Leu) + AMP + diphosphate. The polypeptide is Leucine--tRNA ligase (Verminephrobacter eiseniae (strain EF01-2)).